Reading from the N-terminus, the 846-residue chain is MAVKRLIETFVPENYKIFLDIDRKTKKIKGQVAITGEAKDTVVSFHTKGLHFNKVRAFSVDTNFIENEEDEEIVVKIGETGRVTVSFEYEAELTDNMMGIYPSYYEVNGEKKMLIGTQFESHFARQAFPSIDEPEAKATFDLSVKFDEEEGDIIVSNMPELLNINGIHVFERTVKMSSYLLAFVFGELQYKKGKTKSGVEVGAFATKAHSQAALDFPLDIAIRSIEFYEDYYQTPYPLPHSWHIALPDFSAGAMENWGCITYREVCMLVDPENATIQSKQYVATVIAHELAHQWFGDLVTMQWWDDLWLNESFANNMEYVCMDALEPSWNVWESFSISEANMALNRDATDGVQSVHVEVTHPDEIGTLFDPAIVYAKGSRLMVMLRKWLGDEDFAAGLALYFKRHQYGNTVGDNLWDALAEVSGKDVAAFMHSWVNQPGYPVVTAEVVDDTLILSQKQFFVGEGVDKGRLWNVPLNTNWTGLPDLLSSEKVEIPGFAALKTKNNGKALFLNDANMAHYIIDYKGALLTDLLSEVESLENVTKFQILQDRKLLAKAGVISYADVVNILPSFTNEESYLVNTGLSQLISELELFVDEDSETEKAFQSLVGKLFAKNYARLGWDKVAGESAGDESLRGIVLSKTLYSENADAKTKASQIFAAHKENLASIPADIRPIVLNNEIKTTNSAELVKTYRETYIKTSLQEFKRELEGAVALIKDEKVIAELLESFKNADIVKPQDIAFSWFYLLRNDFSQDAAWAWEKANWAFLEEKLGGDMSYDKFVIYPGNTFKTADKLAEYKAFFEPKLENQGLKRSIEMAIKQITARVALIDSQKAAVDKAITDIAEKL.

Residues glutamate 120 and glycine 252–asparagine 256 contribute to the substrate site. Histidine 288 contacts Zn(2+). The active-site Proton acceptor is glutamate 289. Positions 292 and 311 each coordinate Zn(2+).

This sequence belongs to the peptidase M1 family. Monomer. Zn(2+) serves as cofactor.

It is found in the cytoplasm. The catalysed reaction is Release of an N-terminal amino acid, Xaa-|-Yaa- from a peptide, amide or arylamide. Xaa is preferably Ala, but may be most amino acids including Pro (slow action). When a terminal hydrophobic residue is followed by a prolyl residue, the two may be released as an intact Xaa-Pro dipeptide.. In terms of biological role, aminopeptidase with broad substrate specificity to several peptides. It has more affinity for oligopeptides than for dipeptides. It plays an essential role in the metabolism, it may be involved in nitrogen supply or protein turnover. The chain is Aminopeptidase N (pepN) from Lactococcus lactis subsp. cremoris (strain MG1363).